We begin with the raw amino-acid sequence, 349 residues long: tRNA pseudouridine synthase D (349 aa).

Position 27 (phenylalanine 27) interacts with substrate. Residue aspartate 80 is the Nucleophile of the active site. Substrate is bound at residue asparagine 129. The TRUD domain occupies 155 to 303; sequence GVPNYFGAQR…VEAARRAMLL (149 aa). Position 329 (phenylalanine 329) interacts with substrate.

The protein belongs to the pseudouridine synthase TruD family.

It catalyses the reaction uridine(13) in tRNA = pseudouridine(13) in tRNA. Responsible for synthesis of pseudouridine from uracil-13 in transfer RNAs. The sequence is that of tRNA pseudouridine synthase D from Escherichia coli O81 (strain ED1a).